Reading from the N-terminus, the 302-residue chain is Bifunctional protein FolD (302 aa).

Residues Gly-171–Ser-173, Ser-196, and Ile-237 contribute to the NADP(+) site.

Belongs to the tetrahydrofolate dehydrogenase/cyclohydrolase family. Homodimer.

It carries out the reaction (6R)-5,10-methylene-5,6,7,8-tetrahydrofolate + NADP(+) = (6R)-5,10-methenyltetrahydrofolate + NADPH. The catalysed reaction is (6R)-5,10-methenyltetrahydrofolate + H2O = (6R)-10-formyltetrahydrofolate + H(+). It participates in one-carbon metabolism; tetrahydrofolate interconversion. In terms of biological role, catalyzes the oxidation of 5,10-methylenetetrahydrofolate to 5,10-methenyltetrahydrofolate and then the hydrolysis of 5,10-methenyltetrahydrofolate to 10-formyltetrahydrofolate. This is Bifunctional protein FolD from Sphingopyxis alaskensis (strain DSM 13593 / LMG 18877 / RB2256) (Sphingomonas alaskensis).